A 394-amino-acid polypeptide reads, in one-letter code: Phosphopentomutase (394 aa).

Positions 15, 288, 293, 329, 330, and 341 each coordinate Mn(2+).

Belongs to the phosphopentomutase family. It depends on Mn(2+) as a cofactor.

The protein resides in the cytoplasm. It catalyses the reaction 2-deoxy-alpha-D-ribose 1-phosphate = 2-deoxy-D-ribose 5-phosphate. The catalysed reaction is alpha-D-ribose 1-phosphate = D-ribose 5-phosphate. Its pathway is carbohydrate degradation; 2-deoxy-D-ribose 1-phosphate degradation; D-glyceraldehyde 3-phosphate and acetaldehyde from 2-deoxy-alpha-D-ribose 1-phosphate: step 1/2. Isomerase that catalyzes the conversion of deoxy-ribose 1-phosphate (dRib-1-P) and ribose 1-phosphate (Rib-1-P) to deoxy-ribose 5-phosphate (dRib-5-P) and ribose 5-phosphate (Rib-5-P), respectively. In Bacillus pumilus (strain SAFR-032), this protein is Phosphopentomutase.